Reading from the N-terminus, the 355-residue chain is tRNA N6-adenosine threonylcarbamoyltransferase (355 aa).

His-110 and His-114 together coordinate Fe cation. Residues Leu-132–Gly-136, Asp-165, Gly-178, Asp-182, and Asn-288 each bind substrate. Asp-316 is a binding site for Fe cation.

The protein belongs to the KAE1 / TsaD family. Fe(2+) serves as cofactor.

It localises to the cytoplasm. It carries out the reaction L-threonylcarbamoyladenylate + adenosine(37) in tRNA = N(6)-L-threonylcarbamoyladenosine(37) in tRNA + AMP + H(+). Functionally, required for the formation of a threonylcarbamoyl group on adenosine at position 37 (t(6)A37) in tRNAs that read codons beginning with adenine. Is involved in the transfer of the threonylcarbamoyl moiety of threonylcarbamoyl-AMP (TC-AMP) to the N6 group of A37, together with TsaE and TsaB. TsaD likely plays a direct catalytic role in this reaction. This chain is tRNA N6-adenosine threonylcarbamoyltransferase, found in Lawsonia intracellularis (strain PHE/MN1-00).